The chain runs to 504 residues: PE-PGRS family protein PE_PGRS62 (504 aa).

The region spanning 4–94 is the PE domain; the sequence is VVTVPEAVAA…AAYLNTESAN (91 aa).

Belongs to the mycobacterial PE family. PGRS subfamily. In terms of assembly, interacts with host Toll-like receptor 2 (TLR2).

It is found in the secreted. Its subcellular location is the cell wall. In terms of biological role, supports mycobacterial virulence via inhibition of phagosome maturation and host inducible nitric oxide synthase (iNOS) expression. May promote the survival within macrophages by disturbing the cytokines profiles and blocking the endoplasmic reticulum (ER) stress-mediated apoptosis. May also affect bacterial cell wall composition. Expression in Mycobacterium smegmatis, a nonpathogenic species naturally deficient in PE_PGRS genes, results in enhanced resistance to various in vitro stresses. It also leads to phagosome maturation arrest and increased survival in macrophages. This chain is PE-PGRS family protein PE_PGRS62, found in Mycobacterium tuberculosis (strain ATCC 25618 / H37Rv).